The chain runs to 292 residues: Ribosomal protein L11 methyltransferase (292 aa).

The S-adenosyl-L-methionine site is built by threonine 136, glycine 159, aspartate 181, and asparagine 228.

This sequence belongs to the methyltransferase superfamily. PrmA family.

It is found in the cytoplasm. The enzyme catalyses L-lysyl-[protein] + 3 S-adenosyl-L-methionine = N(6),N(6),N(6)-trimethyl-L-lysyl-[protein] + 3 S-adenosyl-L-homocysteine + 3 H(+). Its function is as follows. Methylates ribosomal protein L11. The chain is Ribosomal protein L11 methyltransferase from Rhizobium etli (strain ATCC 51251 / DSM 11541 / JCM 21823 / NBRC 15573 / CFN 42).